Consider the following 422-residue polypeptide: 3-phosphoshikimate 1-carboxyvinyltransferase (422 aa).

3-phosphoshikimate-binding residues include lysine 21, serine 22, and arginine 26. Lysine 21 contacts phosphoenolpyruvate. The phosphoenolpyruvate site is built by glycine 93 and arginine 121. 3-phosphoshikimate contacts are provided by serine 166, serine 167, glutamine 168, serine 194, aspartate 310, and lysine 337. Position 168 (glutamine 168) interacts with phosphoenolpyruvate. Aspartate 310 functions as the Proton acceptor in the catalytic mechanism. Arginine 341, arginine 382, and lysine 407 together coordinate phosphoenolpyruvate.

This sequence belongs to the EPSP synthase family. In terms of assembly, monomer.

The protein localises to the cytoplasm. The enzyme catalyses 3-phosphoshikimate + phosphoenolpyruvate = 5-O-(1-carboxyvinyl)-3-phosphoshikimate + phosphate. Its pathway is metabolic intermediate biosynthesis; chorismate biosynthesis. Functionally, catalyzes the transfer of the enolpyruvyl moiety of phosphoenolpyruvate (PEP) to the 5-hydroxyl of shikimate-3-phosphate (S3P) to produce enolpyruvyl shikimate-3-phosphate and inorganic phosphate. This chain is 3-phosphoshikimate 1-carboxyvinyltransferase, found in Methanoculleus marisnigri (strain ATCC 35101 / DSM 1498 / JR1).